The sequence spans 223 residues: Ribonuclease T (223 aa).

The Exonuclease domain maps to 20-195 (VVIDVETAGF…YDTERTAELF (176 aa)). Residues D23, E25, H182, and D187 each contribute to the Mg(2+) site. Residue H182 is the Proton donor/acceptor of the active site.

This sequence belongs to the RNase T family. As to quaternary structure, homodimer. The cofactor is Mg(2+).

Its function is as follows. Trims short 3' overhangs of a variety of RNA species, leaving a one or two nucleotide 3' overhang. Responsible for the end-turnover of tRNA: specifically removes the terminal AMP residue from uncharged tRNA (tRNA-C-C-A). Also appears to be involved in tRNA biosynthesis. The polypeptide is Ribonuclease T (Photobacterium profundum (strain SS9)).